We begin with the raw amino-acid sequence, 211 residues long: Uracil phosphoribosyltransferase (211 aa).

GTP is bound at residue 30–34; it reads KGLVR. 5-phospho-alpha-D-ribose 1-diphosphate contacts are provided by residues R79, R104, and 133–141; that span reads DPMLATGTT. Residues I197 and 202-204 each bind uracil; that span reads GDA. D203 provides a ligand contact to 5-phospho-alpha-D-ribose 1-diphosphate.

The protein belongs to the UPRTase family. The cofactor is Mg(2+).

The enzyme catalyses UMP + diphosphate = 5-phospho-alpha-D-ribose 1-diphosphate + uracil. It functions in the pathway pyrimidine metabolism; UMP biosynthesis via salvage pathway; UMP from uracil: step 1/1. With respect to regulation, allosterically activated by GTP. Its function is as follows. Catalyzes the conversion of uracil and 5-phospho-alpha-D-ribose 1-diphosphate (PRPP) to UMP and diphosphate. In Pyrobaculum arsenaticum (strain DSM 13514 / JCM 11321 / PZ6), this protein is Uracil phosphoribosyltransferase.